A 526-amino-acid polypeptide reads, in one-letter code: Plant intracellular Ras-group-related LRR protein 5 (526 aa).

LRR repeat units follow at residues 229 to 252, 253 to 275, 276 to 297, 298 to 321, 323 to 344, 346 to 367, 368 to 390, 391 to 414, 416 to 437, 438 to 463, and 465 to 484; these read LSSL…IGGL, ISLT…IGDL, LNLV…SFNR, LIHL…IGSL, SLKK…ISGC, SMEE…VGKL, STLE…MSSM, ANLK…CYAK, LVKL…LIGN, LEKL…TLSN, and RVLQ…ITEK. Residues 485-492 carry the GVYW; degenerate motif; the sequence is GAQAVVQY.

Belongs to the SHOC2 family. Widely expressed but preferentially in roots.

In terms of biological role, leucine-rich repeat protein that likely mediates protein interactions, possibly in the context of signal transduction. This is Plant intracellular Ras-group-related LRR protein 5 (PIRL5) from Arabidopsis thaliana (Mouse-ear cress).